The primary structure comprises 484 residues: UBX domain-containing protein 11 (484 aa).

Positions 1–28 are disordered; the sequence is MSSPLASLSKTRKVPLESESVNPGRRGI. Residues 69–147 adopt a coiled-coil conformation; the sequence is HDSELMASMT…IGEMERFLSD (79 aa). In terms of domain architecture, SEP spans 227-291; the sequence is LEPIPLKVYR…VSDLRNQIYP (65 aa). One can recognise a UBX domain in the interval 389-466; that stretch reads PMPLLSMLRI…GLVPNATLLL (78 aa). S478 and S482 each carry phosphoserine.

In terms of assembly, interacts with GNA12, GNA13, RND1, RND2 and RND3.

Its subcellular location is the cytoplasm. It localises to the cytoskeleton. May be involved in the reorganization of actin cytoskeleton mediated by RND1, RND2 and RND3. Promotes RHOA activation mediated by GNA12 and GNA13. This Mus musculus (Mouse) protein is UBX domain-containing protein 11 (Ubxn11).